A 614-amino-acid polypeptide reads, in one-letter code: 1-deoxy-D-xylulose-5-phosphate synthase (614 aa).

Residues H74 and 115 to 117 contribute to the thiamine diphosphate site; that span reads AHS. D146 is a Mg(2+) binding site. Thiamine diphosphate-binding positions include 147–148, N175, Y282, and E363; that span reads GA. Position 175 (N175) interacts with Mg(2+).

This sequence belongs to the transketolase family. DXPS subfamily. Homodimer. Mg(2+) is required as a cofactor. Requires thiamine diphosphate as cofactor.

It catalyses the reaction D-glyceraldehyde 3-phosphate + pyruvate + H(+) = 1-deoxy-D-xylulose 5-phosphate + CO2. Its pathway is metabolic intermediate biosynthesis; 1-deoxy-D-xylulose 5-phosphate biosynthesis; 1-deoxy-D-xylulose 5-phosphate from D-glyceraldehyde 3-phosphate and pyruvate: step 1/1. Its function is as follows. Catalyzes the acyloin condensation reaction between C atoms 2 and 3 of pyruvate and glyceraldehyde 3-phosphate to yield 1-deoxy-D-xylulose-5-phosphate (DXP). In Nitrosomonas eutropha (strain DSM 101675 / C91 / Nm57), this protein is 1-deoxy-D-xylulose-5-phosphate synthase.